Consider the following 375-residue polypeptide: o-succinylbenzoate synthase (375 aa).

Lysine 166 functions as the Proton donor in the catalytic mechanism. Mg(2+)-binding residues include aspartate 191, glutamate 216, and aspartate 241. The active-site Proton acceptor is the lysine 265.

It belongs to the mandelate racemase/muconate lactonizing enzyme family. MenC type 2 subfamily. Homotetramer. Requires a divalent metal cation as cofactor.

The catalysed reaction is (1R,6R)-6-hydroxy-2-succinyl-cyclohexa-2,4-diene-1-carboxylate = 2-succinylbenzoate + H2O. It carries out the reaction N-acetyl-D-methionine = N-acetyl-L-methionine. Its pathway is quinol/quinone metabolism; 1,4-dihydroxy-2-naphthoate biosynthesis; 1,4-dihydroxy-2-naphthoate from chorismate: step 4/7. It participates in quinol/quinone metabolism; menaquinone biosynthesis. In terms of biological role, converts 2-succinyl-6-hydroxy-2,4-cyclohexadiene-1-carboxylate (SHCHC) to 2-succinylbenzoate (OSB). Also acts as a N-succinylamino acid racemase (NSAR) that catalyzes the racemization of N-succinyl-D/L-phenylalanine. Can catalyze the racemization of a broad range of N-acylamino acids, including N-acetyl-D-methionine, N-formyl-D/L-methionine, N-formyl-D/L-norleucine, N-formyl-D/L-aminobutyric acid, N-formyl-D/L-norvaline, N-formyl-D/L-homophenylalanine, N-carbamoyl-D-methionine and N-carbamoyl-D-norleucine. May be a bifunctional enzyme involved in menaquinone biosynthesis and in an irreversible pathway for the conversion of D- to L-amino acids, thereby facilitating the survival and/or growth of the organism. In Geobacillus stearothermophilus (Bacillus stearothermophilus), this protein is o-succinylbenzoate synthase.